We begin with the raw amino-acid sequence, 274 residues long: 3-methyl-2-oxobutanoate hydroxymethyltransferase (274 aa).

Mg(2+)-binding residues include D46 and D85. 3-methyl-2-oxobutanoate contacts are provided by residues 46–47, D85, and K115; that span reads DS. Mg(2+) is bound at residue E117. E184 functions as the Proton acceptor in the catalytic mechanism.

Belongs to the PanB family. Homodecamer; pentamer of dimers. It depends on Mg(2+) as a cofactor.

The protein resides in the cytoplasm. The enzyme catalyses 3-methyl-2-oxobutanoate + (6R)-5,10-methylene-5,6,7,8-tetrahydrofolate + H2O = 2-dehydropantoate + (6S)-5,6,7,8-tetrahydrofolate. The protein operates within cofactor biosynthesis; (R)-pantothenate biosynthesis; (R)-pantoate from 3-methyl-2-oxobutanoate: step 1/2. Functionally, catalyzes the reversible reaction in which hydroxymethyl group from 5,10-methylenetetrahydrofolate is transferred onto alpha-ketoisovalerate to form ketopantoate. The sequence is that of 3-methyl-2-oxobutanoate hydroxymethyltransferase from Thermoanaerobacter pseudethanolicus (strain ATCC 33223 / 39E) (Clostridium thermohydrosulfuricum).